A 419-amino-acid chain; its full sequence is Zinc finger CCCH domain-containing protein 62 (419 aa).

Residues 89–116 form a C3H1-type zinc finger; it reads SLRKWVCKYWKDGKCKRGEQCQFLHSWS. WD repeat units lie at residues 129-168, 210-247, 256-293, 296-335, and 383-419; these read GHNKELKGIALPEGSDKLFSVSIDGTLRVWDCNSGQCVHS, GVVGQVNAMTIANGMLFAGTSSGSILVWKATTDSESDP, GHSGEVTCFAVGGQMLYSGSVDKTIKMWDLNTLQCIMT, QHTGTVTSLLCWDKCLISSSLDGTIKVWAYSENGILKVVQ, and FSTHTIATLTIGPQGLLFSGDESGNLRVWTLAAGNKV.

The protein is Zinc finger CCCH domain-containing protein 62 (ZFWD4) of Arabidopsis thaliana (Mouse-ear cress).